The chain runs to 81 residues: Elsinochrome C biosynthesis cluster protein SNOG_08613 (81 aa).

Its function is as follows. Part of the gene cluster that mediates the biosynthesis of elsinochrome C, a perelyenequinone phytotoxin structurally similar to cercosporin. The first step of elsinochrome C biosynthesis is performed by the polyketide synthase elcA which catalyzes the formation of nor-toralactone. The starter unit acyltransferase (SAT) domain of elcA initiates polyketide extension by the selective utilization of acetyl-CoA, which is elongated to the heptaketide in the beta-ketoacyl synthase (KS) domain by successive condensations with six malonyl units introduced by the malonyl acyltransferase (MAT) domain. The product template (PT) domain catalyzes C4-C9 and C2-C11 aldol cyclizations and dehydrations to a trihydroxynaphthalene, which is thought to be delivered to the thioesterase (TE) domain for product release. The bifunctional enzyme elcB then methylates nor-toralactone to toralactone before conducting an unusual oxidative aromatic ring opening. The next step in perylenequinone biosynthesis is an O-methylation at the nascent OH-6 of the elcB product performed by the O-methyltransferase elcD. The oxidative coupling of the two monomeric naphthol units in perylenequinone biosynthesis is catalyzed by the FAD-dependent monooxygenase elcE and the multicopper oxidase elcG. ElcG might catalyze the first intermolecular coupling in a regio- and stereo-selective manner via a phenol radical coupling mechanism and the elcE could forge the second C-C bond intramolecularly via a hydride transfer mechanism. The fasciclin domain-containing protein elcF might also play a role duting this step. The last piece of the puzzle in the biosynthesis of elsinochrome C is the additional annulation by enolate coupling to afford the dihydrobenzo(ghi)perylenequinone system, catalyzed by the FAD-dependent monooxygenase elcH. This is Elsinochrome C biosynthesis cluster protein SNOG_08613 from Phaeosphaeria nodorum (strain SN15 / ATCC MYA-4574 / FGSC 10173) (Glume blotch fungus).